We begin with the raw amino-acid sequence, 236 residues long: Dolichol-phosphate mannosyltransferase (236 aa).

GDP-alpha-D-mannose contacts are provided by Pro9, Tyr11, Glu13, Ile40, Asp42, Asp95, Ala96, Asp97, Arg124, Val160, Arg211, and Lys217. Position 97 (Asp97) interacts with Mg(2+). Position 97 (Asp97) interacts with Mn(2+).

It belongs to the glycosyltransferase 2 family. In terms of assembly, component of the dolichol-phosphate mannose (DPM) synthase complex composed of dpm1, dpm2 and dpm3. The cofactor is Mg(2+). Mn(2+) serves as cofactor. Ca(2+) is required as a cofactor.

It is found in the endoplasmic reticulum. It catalyses the reaction a di-trans,poly-cis-dolichyl phosphate + GDP-alpha-D-mannose = a di-trans,poly-cis-dolichyl beta-D-mannosyl phosphate + GDP. Its pathway is protein modification; protein glycosylation. Functionally, transfers mannose from GDP-mannose to dolichol monophosphate to form dolichol phosphate mannose (Dol-P-Man) which is the mannosyl donor in pathways leading to N-glycosylation, glycosyl phosphatidylinositol membrane anchoring, and O-mannosylation of proteins. This is Dolichol-phosphate mannosyltransferase from Schizosaccharomyces pombe (strain 972 / ATCC 24843) (Fission yeast).